Reading from the N-terminus, the 140-residue chain is Putative ABC transporter permease protein ORF1 (140 aa).

The 133-residue stretch at 1 to 133 folds into the ABC transmembrane type-1 domain; that stretch reads DPNVAFYSVV…ITTAGIFAYF (133 aa). A run of 3 helical transmembrane segments spans residues 9 to 29, 65 to 85, and 115 to 135; these read VVAV…IAAL, TACI…YVMT, and TIAS…YFVT.

It belongs to the binding-protein-dependent transport system permease family. MalFG subfamily.

It is found in the cell membrane. May play a role in sugar transport. The chain is Putative ABC transporter permease protein ORF1 from Caldicellulosiruptor sp. (strain Rt8B.4).